Consider the following 503-residue polypeptide: Probable cytosol aminopeptidase (503 aa).

Residues lysine 270 and aspartate 275 each coordinate Mn(2+). Lysine 282 is a catalytic residue. 3 residues coordinate Mn(2+): aspartate 293, aspartate 352, and glutamate 354. The active site involves arginine 356.

This sequence belongs to the peptidase M17 family. Requires Mn(2+) as cofactor.

It localises to the cytoplasm. The enzyme catalyses Release of an N-terminal amino acid, Xaa-|-Yaa-, in which Xaa is preferably Leu, but may be other amino acids including Pro although not Arg or Lys, and Yaa may be Pro. Amino acid amides and methyl esters are also readily hydrolyzed, but rates on arylamides are exceedingly low.. The catalysed reaction is Release of an N-terminal amino acid, preferentially leucine, but not glutamic or aspartic acids.. Presumably involved in the processing and regular turnover of intracellular proteins. Catalyzes the removal of unsubstituted N-terminal amino acids from various peptides. The polypeptide is Probable cytosol aminopeptidase (Yersinia pseudotuberculosis serotype O:1b (strain IP 31758)).